A 557-amino-acid chain; its full sequence is Potassium-transporting ATPase potassium-binding subunit (557 aa).

Transmembrane regions (helical) follow at residues 5–25, 63–83, 132–152, 170–190, 253–273, 283–303, 329–349, 356–376, 379–399, 416–436, 484–504, and 526–546; these read GFLL…PLGS, LSAI…MLLG, GLTV…FALI, LLRI…LFFI, FVQM…FGEV, LLWA…WAEV, VLVS…AVIA, ALGG…FGGV, GLYG…LMIG, LTAL…ALAM, LLAL…MAIA, and LFVG…FIPA.

Belongs to the KdpA family. In terms of assembly, the system is composed of three essential subunits: KdpA, KdpB and KdpC.

The protein localises to the cell inner membrane. In terms of biological role, part of the high-affinity ATP-driven potassium transport (or Kdp) system, which catalyzes the hydrolysis of ATP coupled with the electrogenic transport of potassium into the cytoplasm. This subunit binds the periplasmic potassium ions and delivers the ions to the membrane domain of KdpB through an intramembrane tunnel. The chain is Potassium-transporting ATPase potassium-binding subunit from Escherichia coli O127:H6 (strain E2348/69 / EPEC).